The chain runs to 632 residues: Armadillo repeat-containing X-linked protein 2 (632 aa).

Topologically, residues 1–6 (MSRVRD) are mitochondrial intermembrane. The segment at 1-6 (MSRVRD) is mitochondrion outer membrane (MOM)-targeting sequence. Residues 7–25 (AGCVAAGIVIGAGAWYCVY) traverse the membrane as a helical; Signal-anchor segment. Residues 26–40 (KYTRGRDQTKKRMAK) are mitochondrion outer membrane (MOM)-targeting sequence. Residues 26-632 (KYTRGRDQTK…VKVIKLVNKF (607 aa)) are Cytoplasmic-facing. 3 disordered regions span residues 68 to 124 (GFSP…AGVG), 160 to 304 (APKV…KVEV), and 335 to 369 (VPDS…RPVA). Low complexity-rich tracts occupy residues 86–120 (EASA…EADG) and 211–241 (VASP…SPGT). Acidic residues predominate over residues 336 to 356 (PDSEEGESGWTDTESDSDSEP). 3 ARM repeats span residues 376–416 (PYEI…NNAN), 418–457 (SCNQ…NLSE), and 498–537 (ITND…NFAE).

The protein belongs to the eutherian X-chromosome-specific Armcx family. In terms of tissue distribution, expressed at high levels ovary, heart, testis, prostate, brain, spleen and colon. Expressed at very low levels in liver and thymus. Not expressed in peripheral blood leukocytes. Not expressed in pancreas and ovarian carcinomas.

The protein resides in the mitochondrion. It localises to the mitochondrion outer membrane. May regulate the dynamics and distribution of mitochondria in neural cells. The polypeptide is Armadillo repeat-containing X-linked protein 2 (ARMCX2) (Homo sapiens (Human)).